The sequence spans 119 residues: Odin profilin (119 aa).

It belongs to the Asgard profilin family.

Its subcellular location is the cytoplasm. It is found in the cytoskeleton. Inhibition of rabbit actin polymerization is reduced by phosphatidylinositol-(4,5)-P2(1,2-dipalmitoyl), a soluble form of the phospholipid phosphatidylinositol, suggesting an unknown lipid might regulate actin-profilin interaction in vivo. In terms of biological role, binds to actin and affects the structure of the cytoskeleton. At high concentrations inhibits spontaneous rabbit actin nucleation. This strongly suggests this archaea has a profilin-regulated actin system, and actin-type genes can be identified in this organism. This is Odin profilin from Odinarchaeota yellowstonii (strain LCB_4).